The chain runs to 134 residues: ATP synthase epsilon chain, chloroplastic (134 aa).

Belongs to the ATPase epsilon chain family. As to quaternary structure, F-type ATPases have 2 components, CF(1) - the catalytic core - and CF(0) - the membrane proton channel. CF(1) has five subunits: alpha(3), beta(3), gamma(1), delta(1), epsilon(1). CF(0) has three main subunits: a, b and c.

It is found in the plastid. It localises to the chloroplast thylakoid membrane. In terms of biological role, produces ATP from ADP in the presence of a proton gradient across the membrane. The sequence is that of ATP synthase epsilon chain, chloroplastic from Chlorella vulgaris (Green alga).